Here is a 203-residue protein sequence, read N- to C-terminus: GTP cyclohydrolase-2 (203 aa).

49-53 (RIHSE) is a GTP binding site. Residues C54, C65, and C67 each contribute to the Zn(2+) site. GTP-binding positions include Q70, 92–94 (EGR), and T114. D126 functions as the Proton acceptor in the catalytic mechanism. The active-site Nucleophile is R128. T149 and K154 together coordinate GTP.

It belongs to the GTP cyclohydrolase II family. Requires Zn(2+) as cofactor.

The catalysed reaction is GTP + 4 H2O = 2,5-diamino-6-hydroxy-4-(5-phosphoribosylamino)-pyrimidine + formate + 2 phosphate + 3 H(+). It functions in the pathway cofactor biosynthesis; riboflavin biosynthesis; 5-amino-6-(D-ribitylamino)uracil from GTP: step 1/4. Its function is as follows. Catalyzes the conversion of GTP to 2,5-diamino-6-ribosylamino-4(3H)-pyrimidinone 5'-phosphate (DARP), formate and pyrophosphate. This is GTP cyclohydrolase-2 from Shewanella sp. (strain MR-4).